The chain runs to 323 residues: Dolichyl-phosphate beta-glucosyltransferase ALG5A (323 aa).

At 1-5 the chain is on the lumenal side; the sequence is MKFWR. A helical transmembrane segment spans residues 6–26; sequence FVQILFFLGVAAVGLVVAVMI. The Cytoplasmic segment spans residues 27 to 323; it reads ANADDTTLFD…GAWKIRDRRH (297 aa).

It belongs to the glycosyltransferase 2 family.

Its subcellular location is the endoplasmic reticulum membrane. It catalyses the reaction a di-trans,poly-cis-dolichyl phosphate + UDP-alpha-D-glucose = a di-trans,poly-cis-dolichyl beta-D-glucosyl phosphate + UDP. The protein operates within protein modification; protein glycosylation. Dolichyl-phosphate beta-glucosyltransferase involved in the glycosylation of glycoproteins through the synthesis of dolichyl beta-D-glucosyl phosphate which serves as a sugar donor for transfer of three glucose residues to the Man-9-GlcNAc-2-PP-dolichol precursor to N-glycans. The sequence is that of Dolichyl-phosphate beta-glucosyltransferase ALG5A from Trichomonas vaginalis (strain ATCC PRA-98 / G3).